A 411-amino-acid chain; its full sequence is Adenylosuccinate synthetase (411 aa).

Residues 11–17 (GDEGKGK) and 39–41 (GHT) contribute to the GTP site. Aspartate 12 acts as the Proton acceptor in catalysis. 2 residues coordinate Mg(2+): aspartate 12 and glycine 39. IMP contacts are provided by residues 12–15 (DEGK), 37–40 (NAGH), threonine 121, arginine 135, glutamine 215, threonine 230, and arginine 294. Residue histidine 40 is the Proton donor of the active site. Position 290–296 (290–296 (TTTKRPR)) interacts with substrate. Residues arginine 296, 322–324 (KLD), and 400–402 (STS) contribute to the GTP site.

The protein belongs to the adenylosuccinate synthetase family. Homodimer. The cofactor is Mg(2+).

It is found in the cytoplasm. The enzyme catalyses IMP + L-aspartate + GTP = N(6)-(1,2-dicarboxyethyl)-AMP + GDP + phosphate + 2 H(+). It participates in purine metabolism; AMP biosynthesis via de novo pathway; AMP from IMP: step 1/2. Plays an important role in the de novo pathway of purine nucleotide biosynthesis. Catalyzes the first committed step in the biosynthesis of AMP from IMP. The protein is Adenylosuccinate synthetase of Helicobacter pylori (strain HPAG1).